The sequence spans 129 residues: Glycine cleavage system H protein (129 aa).

The 83-residue stretch at 24–106 folds into the Lipoyl-binding domain; sequence SYTVGITEHA…FGDGWFFRVM (83 aa). The residue at position 65 (Lys-65) is an N6-lipoyllysine.

The protein belongs to the GcvH family. In terms of assembly, the glycine cleavage system is composed of four proteins: P, T, L and H. The cofactor is (R)-lipoate.

Functionally, the glycine cleavage system catalyzes the degradation of glycine. The H protein shuttles the methylamine group of glycine from the P protein to the T protein. The polypeptide is Glycine cleavage system H protein (Shewanella frigidimarina (strain NCIMB 400)).